The chain runs to 641 residues: Protein BCAP (641 aa).

Coiled coils occupy residues 83–144 (HWPV…KQND), 191–270 (EKDN…RKLE), 299–375 (QKQK…EREQ), and 487–599 (FKLE…TLNA).

It belongs to the ODF2 family.

The protein localises to the cytoplasm. Its subcellular location is the cytoskeleton. The protein resides in the microtubule organizing center. It is found in the centrosome. It localises to the centriole. The protein localises to the centriolar satellite. Its subcellular location is the cilium basal body. In terms of biological role, acts as a suppressor of ciliogenesis, specifically, the initiation of ciliogenesis. This Xenopus laevis (African clawed frog) protein is Protein BCAP (odf2l).